A 125-amino-acid polypeptide reads, in one-letter code: Large ribosomal subunit protein bL12 (125 aa).

This sequence belongs to the bacterial ribosomal protein bL12 family. Homodimer. Part of the ribosomal stalk of the 50S ribosomal subunit. Forms a multimeric L10(L12)X complex, where L10 forms an elongated spine to which 2 to 4 L12 dimers bind in a sequential fashion. Binds GTP-bound translation factors.

Forms part of the ribosomal stalk which helps the ribosome interact with GTP-bound translation factors. Is thus essential for accurate translation. In Caldanaerobacter subterraneus subsp. tengcongensis (strain DSM 15242 / JCM 11007 / NBRC 100824 / MB4) (Thermoanaerobacter tengcongensis), this protein is Large ribosomal subunit protein bL12.